We begin with the raw amino-acid sequence, 123 residues long: Small ribosomal subunit protein uS12c (123 aa).

Belongs to the universal ribosomal protein uS12 family. In terms of assembly, part of the 30S ribosomal subunit.

The protein resides in the plastid. Its subcellular location is the chloroplast. In terms of biological role, with S4 and S5 plays an important role in translational accuracy. Located at the interface of the 30S and 50S subunits. This is Small ribosomal subunit protein uS12c (rps12) from Anthoceros angustus (Hornwort).